A 141-amino-acid chain; its full sequence is Galactose-6-phosphate isomerase subunit LacA (141 aa).

It belongs to the LacAB/RpiB family. Heteromultimeric protein consisting of LacA and LacB.

The enzyme catalyses aldehydo-D-galactose 6-phosphate = keto-D-tagatose 6-phosphate. The protein operates within carbohydrate metabolism; D-galactose 6-phosphate degradation; D-tagatose 6-phosphate from D-galactose 6-phosphate: step 1/1. The polypeptide is Galactose-6-phosphate isomerase subunit LacA (Streptococcus agalactiae serotype Ia (strain ATCC 27591 / A909 / CDC SS700)).